The chain runs to 472 residues: Eukaryotic translation initiation factor 2 subunit 3 (472 aa).

A2 bears the N-acetylalanine; partial mark. A tr-type G domain is found at 39–247 (QATINIGTIG…YIVKKIPVPL (209 aa)). Positions 48-55 (GHVAHGKS) are G1. 51-56 (AHGKST) lines the GTP pocket. The G2 stretch occupies residues 76 to 80 (NITIK). The interval 134-137 (DCPG) is G3. Residues 190–193 (NKID) and 225–227 (SAQ) contribute to the GTP site. The tract at residues 190-193 (NKID) is G4. Residues 225-227 (SAQ) are G5. Residues 457-469 (GQIRRGVTIKPTV) are interacts with CDC123.

This sequence belongs to the TRAFAC class translation factor GTPase superfamily. Classic translation factor GTPase family. EIF2G subfamily. In terms of assembly, eukaryotic translation initiation factor 2 eIF2 is a heterotrimeric complex composed of an alpha (EIF2S1), a beta (EIF2S2) and a gamma (EIF2S3) chain. eIF2 is member of the 43S pre-initiation complex (43S PIC).

It localises to the cytoplasm. The protein resides in the cytosol. It catalyses the reaction GTP + H2O = GDP + phosphate + H(+). Its function is as follows. Member of the eIF2 complex that functions in the early steps of protein synthesis by forming a ternary complex with GTP and initiator tRNA. This complex binds to a 40S ribosomal subunit, followed by mRNA binding to form the 43S pre-initiation complex (43S PIC). Junction of the 60S ribosomal subunit to form the 80S initiation complex is preceded by hydrolysis of the GTP bound to eIF2 and release of an eIF2-GDP binary complex. In order for eIF2 to recycle and catalyze another round of initiation, the GDP bound to eIF2 must exchange with GTP by way of a reaction catalyzed by eIF-2B. This is Eukaryotic translation initiation factor 2 subunit 3 (EIF2S3) from Gallus gallus (Chicken).